We begin with the raw amino-acid sequence, 68 residues long: MGAAYHFMGKAIPPHQLAIGTLGLLGLLVVPNPFKSAKPKTVDIKTDNKDEEKFIENYLKKHSEKQDA.

The chain crosses the membrane as a helical span at residues 15–31 (HQLAIGTLGLLGLLVVP).

This sequence belongs to the ATP19 family. F-type ATPases have 2 components, CF(1) - the catalytic core - and CF(0) - the membrane proton channel. In yeast, the dimeric form of ATP synthase consists of 17 polypeptides: alpha, beta, gamma, delta, epsilon, 4 (B), 5 (OSCP), 6 (A), 8, 9 (C), d, E (Tim11), f, g, h, i/j and k.

The protein resides in the mitochondrion inner membrane. Its function is as follows. Mitochondrial membrane ATP synthase (F(1)F(0) ATP synthase or Complex V) produces ATP from ADP in the presence of a proton gradient across the membrane which is generated by electron transport complexes of the respiratory chain. F-type ATPases consist of two structural domains, F(1) - containing the extramembraneous catalytic core and F(0) - containing the membrane proton channel, linked together by a central stalk and a peripheral stalk. During catalysis, ATP synthesis in the catalytic domain of F(1) is coupled via a rotary mechanism of the central stalk subunits to proton translocation. Part of the complex F(0) domain. Minor subunit located with subunit a in the membrane. The K chain binds the dimeric form by interacting with the G and E chains. The polypeptide is ATP synthase subunit K, mitochondrial (ATP19) (Saccharomyces cerevisiae (strain ATCC 204508 / S288c) (Baker's yeast)).